The primary structure comprises 566 residues: Putative UDP-glucuronate:xylan alpha-glucuronosyltransferase 5 (566 aa).

A helical; Signal-anchor for type II membrane protein transmembrane segment spans residues 17-37 (LILISLSFLGLLLNFKPLFLL). Mn(2+) contacts are provided by D372 and D374. Substrate is bound by residues 372-374 (DAD), 401-403 (NSG), 428-432 (NGGDQ), and 475-480 (HYLGLK). H475 is a binding site for Mn(2+).

The protein belongs to the glycosyltransferase 8 family. Glycogenin subfamily. It depends on Mn(2+) as a cofactor.

It localises to the golgi apparatus membrane. Functionally, may be involved in the substitutions of the xylan backbone in stem glucuronoxylan. This Arabidopsis thaliana (Mouse-ear cress) protein is Putative UDP-glucuronate:xylan alpha-glucuronosyltransferase 5 (GUX5).